The following is a 445-amino-acid chain: ATP-dependent protease ATPase subunit HslU (445 aa).

ATP-binding positions include I17, 59–64 (GVGKTE), D254, E319, and R391.

It belongs to the ClpX chaperone family. HslU subfamily. A double ring-shaped homohexamer of HslV is capped on each side by a ring-shaped HslU homohexamer. The assembly of the HslU/HslV complex is dependent on binding of ATP.

It is found in the cytoplasm. Its function is as follows. ATPase subunit of a proteasome-like degradation complex; this subunit has chaperone activity. The binding of ATP and its subsequent hydrolysis by HslU are essential for unfolding of protein substrates subsequently hydrolyzed by HslV. HslU recognizes the N-terminal part of its protein substrates and unfolds these before they are guided to HslV for hydrolysis. The protein is ATP-dependent protease ATPase subunit HslU of Pseudomonas fluorescens (strain SBW25).